The sequence spans 607 residues: Siderophore iron transporter mirC (607 aa).

12 consecutive transmembrane segments (helical) span residues 67–89, 129–148, 186–208, 223–245, 279–301, 311–328, 349–368, 388–410, 417–436, 446–468, 481–503, and 557–574; these read LVIA…QTIM, VFGR…LGYI, SLLN…VWIG, WGYG…SLLL, IFGL…LAAN, IVAM…LPFW, TALA…YFSV, GRVT…ILIK, VYVT…MLLY, VLGT…QLGV, TAMF…GAVW, and LLVL…LSLL. Residues 584–593 show a composition bias toward basic and acidic residues; that stretch reads SESSDHDDAS. Residues 584-607 are disordered; it reads SESSDHDDASPRNGLGPGERAKRT.

The protein belongs to the major facilitator superfamily.

It is found in the membrane. The polypeptide is Siderophore iron transporter mirC (mirC) (Emericella nidulans (strain FGSC A4 / ATCC 38163 / CBS 112.46 / NRRL 194 / M139) (Aspergillus nidulans)).